The chain runs to 119 residues: UPF0342 protein GTNG_0551 (119 aa).

It belongs to the UPF0342 family.

The protein is UPF0342 protein GTNG_0551 of Geobacillus thermodenitrificans (strain NG80-2).